Reading from the N-terminus, the 266-residue chain is 15-hydroxyprostaglandin dehydrogenase [NAD(+)] (266 aa).

NAD(+) is bound by residues 12–20 (GAAQGIGKA), 36–37 (DW), 63–65 (CDV), and asparagine 91. Substrate-binding residues include serine 138 and glutamine 148. Catalysis depends on tyrosine 151, which acts as the Proton acceptor. NAD(+) is bound by residues 151–155 (YCASK) and 186–188 (VKT).

It belongs to the short-chain dehydrogenases/reductases (SDR) family. Homodimer.

It is found in the cytoplasm. It catalyses the reaction prostaglandin E2 + NAD(+) = 15-oxoprostaglandin E2 + NADH + H(+). It carries out the reaction (15S)-hydroxy-(5Z,8Z,11Z,13E)-eicosatetraenoate + NAD(+) = 15-oxo-(5Z,8Z,11Z,13E)-eicosatetraenoate + NADH + H(+). The enzyme catalyses (11R)-hydroxy-(5Z,8Z,12E,14Z)-eicosatetraenoate + NAD(+) = 11-oxo-(5Z,8Z,12E,14Z)-eicosatetraenoate + NADH + H(+). The catalysed reaction is lipoxin A4 + NAD(+) = 15-oxo-(5S,6R)-dihydroxy-(7E,9E,11Z,13E)-eicosatetraenoate + NADH + H(+). It catalyses the reaction 15-oxo-(5S,6R)-dihydroxy-(7E,9E,11Z)-eicosatrienoate + NADH + H(+) = (5S,6R,15S)-trihydroxy-(7E,9E,11Z)-eicosatrienoate + NAD(+). It carries out the reaction prostaglandin A1 + NAD(+) = 15-oxo-prostaglandin A1 + NADH + H(+). The enzyme catalyses prostaglandin E1 + NAD(+) = 15-oxoprostaglandin E1 + NADH + H(+). The catalysed reaction is 14-hydroxy-(4Z,7Z,10Z,12E,16Z,19Z)-docosahexaenoate + NAD(+) = 14-oxo-(4Z,7Z,10Z,12E,16Z,19Z)-docosahexaenoate + NADH + H(+). It catalyses the reaction resolvin E1 + NAD(+) = 18-oxo-resolvin E1 + NADH + H(+). It carries out the reaction resolvin D1 + NAD(+) = 8-oxoresolvin D1 + NADH + H(+). The enzyme catalyses resolvin D1 + NAD(+) = 17-oxoresolvin D1 + NADH + H(+). The catalysed reaction is resolvin D2 + NAD(+) = 7-oxoresolvin D2 + NADH + H(+). It catalyses the reaction resolvin D2 + NAD(+) = 16-oxoresolvin D2 + NADH + H(+). In terms of biological role, catalyzes the NAD-dependent dehydrogenation (oxidation) of a broad array of hydroxylated polyunsaturated fatty acids (mainly eicosanoids and docosanoids, including prostaglandins, lipoxins and resolvins), yielding their corresponding keto (oxo) metabolites. Decreases the levels of the pro-proliferative prostaglandins such as prostaglandin E2 (whose activity is increased in cancer because of an increase in the expression of cyclooxygenase 2) and generates oxo-fatty acid products that can profoundly influence cell function by abrogating pro-inflammatory cytokine expression. Converts resolvins E1, D1 and D2 to their oxo products, which represents a mode of resolvin inactivation. Resolvin E1 plays important roles during the resolution phase of acute inflammation, while resolvins D1 and D2 have a unique role in obesity-induced adipose inflammation. The protein is 15-hydroxyprostaglandin dehydrogenase [NAD(+)] (Hpgd) of Rattus norvegicus (Rat).